Here is a 472-residue protein sequence, read N- to C-terminus: Maintenance of mitochondrial morphology protein 1 (472 aa).

Topologically, residues 1-22 (MAFQQGEAAPVSTQSSLSFTQG) are lumenal. The helical transmembrane segment at 23-43 (FLLGQLSVVLLIGAFIKFFIF) threads the bilayer. The Cytoplasmic segment spans residues 44-472 (GEAPPPPSRG…GSMPEAPGAQ (429 aa)). Disordered stretches follow at residues 51–92 (SRGL…VPSS), 270–303 (LHTP…PKSS), and 370–472 (RMGR…PGAQ). Over residues 81–92 (STSNVLRPVPSS) the composition is skewed to polar residues. The SMP-LTD domain occupies 124–365 (QPESLDWFNV…EPRVQVVGLP (242 aa)). The segment covering 270–280 (LHTPSPMPSPP) has biased composition (pro residues). Positions 281–297 (TAGAQPAAGAQPTDGGD) are enriched in low complexity. Residues 450–460 (TRERSLGDDFH) show a composition bias toward basic and acidic residues.

This sequence belongs to the MMM1 family. Homodimer. Component of the ER-mitochondria encounter structure (ERMES) or MDM complex, composed of mmm1, mdm10, mdm12 and mdm34. A mmm1 homodimer associates with one molecule of mdm12 on each side in a pairwise head-to-tail manner, and the SMP-LTD domains of mmm1 and mdm12 generate a continuous hydrophobic tunnel for phospholipid trafficking.

It localises to the endoplasmic reticulum membrane. In terms of biological role, component of the ERMES/MDM complex, which serves as a molecular tether to connect the endoplasmic reticulum (ER) and mitochondria. Components of this complex are involved in the control of mitochondrial shape and protein biogenesis, and function in nonvesicular lipid trafficking between the ER and mitochondria. The mdm12-mmm1 subcomplex functions in the major beta-barrel assembly pathway that is responsible for biogenesis of all outer membrane beta-barrel proteins, and acts in a late step after the SAM complex. The mdm10-mdm12-mmm1 subcomplex further acts in the TOM40-specific pathway after the action of the mdm12-mmm1 complex. Essential for establishing and maintaining the structure of mitochondria and maintenance of mtDNA nucleoids. The sequence is that of Maintenance of mitochondrial morphology protein 1 from Emericella nidulans (strain FGSC A4 / ATCC 38163 / CBS 112.46 / NRRL 194 / M139) (Aspergillus nidulans).